A 662-amino-acid chain; its full sequence is UvrABC system protein B (662 aa).

The region spanning 25–414 (TGLNSKKRSQ…GTVVELIIRP (390 aa)) is the Helicase ATP-binding domain. 38–45 (GITGSGKT) contributes to the ATP binding site. Positions 91–114 (YYDYYQPESYIVRTDTFIEKDSSI) match the Beta-hairpin motif. One can recognise a Helicase C-terminal domain in the interval 430-592 (QVEDLISEIQ…IIPKTINRAI (163 aa)). Residues 622–657 (KAHMDKLKKEMFKAASNLEFEQAAKLRNQLKALEEA) form the UVR domain.

Belongs to the UvrB family. In terms of assembly, forms a heterotetramer with UvrA during the search for lesions. Interacts with UvrC in an incision complex.

Its subcellular location is the cytoplasm. Functionally, the UvrABC repair system catalyzes the recognition and processing of DNA lesions. A damage recognition complex composed of 2 UvrA and 2 UvrB subunits scans DNA for abnormalities. Upon binding of the UvrA(2)B(2) complex to a putative damaged site, the DNA wraps around one UvrB monomer. DNA wrap is dependent on ATP binding by UvrB and probably causes local melting of the DNA helix, facilitating insertion of UvrB beta-hairpin between the DNA strands. Then UvrB probes one DNA strand for the presence of a lesion. If a lesion is found the UvrA subunits dissociate and the UvrB-DNA preincision complex is formed. This complex is subsequently bound by UvrC and the second UvrB is released. If no lesion is found, the DNA wraps around the other UvrB subunit that will check the other stand for damage. In Rickettsia prowazekii (strain Madrid E), this protein is UvrABC system protein B.